A 162-amino-acid polypeptide reads, in one-letter code: Flagellar assembly factor FliW (162 aa).

Belongs to the FliW family. In terms of assembly, interacts with translational regulator CsrA and flagellin(s).

Its subcellular location is the cytoplasm. Its function is as follows. Acts as an anti-CsrA protein, binds CsrA and prevents it from repressing translation of its target genes, one of which is flagellin. Binds to flagellin and participates in the assembly of the flagellum. This chain is Flagellar assembly factor FliW, found in Magnetococcus marinus (strain ATCC BAA-1437 / JCM 17883 / MC-1).